The chain runs to 703 residues: MFEHKIFKMDFAGRELSVEIGKICEMASGSCIVRYSDSMVMVNTTKSAKPRDGIDFFPLSVDYEEKLYSVGKIPGGFLKREGKPSEKAILTSRLIDRPIRPLFPKGFRNDVQVVATVLSVDQDCTPDIVAMIGSSIALSISDIPFNGPTGSVCVGLVDGAFVVNPNAEQREKSSMHLVVSGTKEAIMMVEAGADEVPDEVMLDAILFAHQEIKKIVEFIEGIVAEVGKEKMPVELYHAGEEITQLVREFATDKMKKAVQTFEKLERMENMDRVKEETLAHFEETLEDFEDFVGDIEEVLQDIIKEEVRKLIVHENVRPDNRKLEEIRPIWCETGMIPRAHGSAIFTRGQTQVLNVATLGALGDVQKLDGLDEEENKRYMHHYNFPAYSVGEARPSRGPGRREIGHGALAERALLPVIPSQEEFPYAIRLVSEVLSSNGSTSQASVCGSTLSLLDAGVPIKDMVAGIAMGLIKHDGKVAVLSDIQGMEDHLGDMDFKVAGTEYGITAIQMDIKIDGIDKEILQRALKQAKEGRIHILGEMRKTISQPKPELSPYAPKIVKMQINPDKIKDVIGPGGKIITKIIDETGVKIDIEQTGEVFISGIEIDMIKKAQELINNIVVEPEVGKTYKGKVSRIMNFGAFVEILPGKEGLLHISHIAHERVAKVEDVLNIGDEVEVKVTEIDEKGRVNLSRKVLLPKPEHKNK.

D488 and D494 together coordinate Mg(2+). The KH domain occupies 555 to 614 (PKIVKMQINPDKIKDVIGPGGKIITKIIDETGVKIDIEQTGEVFISGIEIDMIKKAQELI). An S1 motif domain is found at 624–692 (GKTYKGKVSR…EKGRVNLSRK (69 aa)).

Belongs to the polyribonucleotide nucleotidyltransferase family. Mg(2+) is required as a cofactor.

Its subcellular location is the cytoplasm. It carries out the reaction RNA(n+1) + phosphate = RNA(n) + a ribonucleoside 5'-diphosphate. Functionally, involved in mRNA degradation. Catalyzes the phosphorolysis of single-stranded polyribonucleotides processively in the 3'- to 5'-direction. This chain is Polyribonucleotide nucleotidyltransferase, found in Clostridioides difficile (strain 630) (Peptoclostridium difficile).